The following is a 114-amino-acid chain: QAPKIIETITDNREDDGAGNYFYEFETENGIRQSVRGTPGAAGAVIKTGSFSFPLDDGTLAEFIFEADEYGYRVDSPLIPVAPPNPSHVEELLQIVAQLKAQGAQWNDQGERID.

Glutamine 1 is modified (pyrrolidone carboxylic acid). The Chitin-binding type R&amp;R domain maps to alanine 18–proline 83.

In terms of tissue distribution, arthrodial membrane.

The polypeptide is Cuticle protein AMP5 (Homarus americanus (American lobster)).